The primary structure comprises 185 residues: Pap fimbrial major pilin protein (185 aa).

An N-terminal signal peptide occupies residues 1–22 (MIKSVIAGAVAMAVVSFGVNNA). The cysteines at positions 44 and 83 are disulfide-linked.

The protein belongs to the fimbrial protein family.

The protein localises to the secreted. Its subcellular location is the fimbrium. Its function is as follows. Polymerizes to form the thick (6.8 nm in diameter) rod of the pilus (also called fimbria). The rod is a right-handed helical cylinder with 3.28 PapA subunits per turn. Pili are polar filaments radiating from the surface of the bacterium to a length of 0.5-1.5 micrometers and numbering 100-300 per cell, and enable bacteria to colonize the epithelium of specific host organs. The polypeptide is Pap fimbrial major pilin protein (papA) (Escherichia coli).